The sequence spans 246 residues: Orotidine 5'-phosphate decarboxylase (246 aa).

Substrate contacts are provided by residues aspartate 22, lysine 44, 71–80, threonine 131, arginine 192, glutamine 201, glycine 221, and arginine 222; that span reads DLKFHDIPNT. Lysine 73 acts as the Proton donor in catalysis.

The protein belongs to the OMP decarboxylase family. Type 1 subfamily. Homodimer.

It carries out the reaction orotidine 5'-phosphate + H(+) = UMP + CO2. The protein operates within pyrimidine metabolism; UMP biosynthesis via de novo pathway; UMP from orotate: step 2/2. In terms of biological role, catalyzes the decarboxylation of orotidine 5'-monophosphate (OMP) to uridine 5'-monophosphate (UMP). This Enterobacter sp. (strain 638) protein is Orotidine 5'-phosphate decarboxylase.